The following is a 208-amino-acid chain: High frequency lysogenization protein HflD homolog (208 aa).

This sequence belongs to the HflD family.

It localises to the cytoplasm. The protein localises to the cell inner membrane. The protein is High frequency lysogenization protein HflD homolog of Pseudomonas entomophila (strain L48).